The following is a 122-amino-acid chain: Large ribosomal subunit protein uL14 (122 aa).

The protein belongs to the universal ribosomal protein uL14 family. As to quaternary structure, part of the 50S ribosomal subunit. Forms a cluster with proteins L3 and L19. In the 70S ribosome, L14 and L19 interact and together make contacts with the 16S rRNA in bridges B5 and B8.

In terms of biological role, binds to 23S rRNA. Forms part of two intersubunit bridges in the 70S ribosome. This Chlorobium luteolum (strain DSM 273 / BCRC 81028 / 2530) (Pelodictyon luteolum) protein is Large ribosomal subunit protein uL14.